We begin with the raw amino-acid sequence, 198 residues long: ATP-dependent Clp protease proteolytic subunit 2 (198 aa).

The active-site Nucleophile is S101. H126 is a catalytic residue.

Belongs to the peptidase S14 family. In terms of assembly, fourteen ClpP subunits assemble into 2 heptameric rings which stack back to back to give a disk-like structure with a central cavity, resembling the structure of eukaryotic proteasomes.

It is found in the cytoplasm. The catalysed reaction is Hydrolysis of proteins to small peptides in the presence of ATP and magnesium. alpha-casein is the usual test substrate. In the absence of ATP, only oligopeptides shorter than five residues are hydrolyzed (such as succinyl-Leu-Tyr-|-NHMec, and Leu-Tyr-Leu-|-Tyr-Trp, in which cleavage of the -Tyr-|-Leu- and -Tyr-|-Trp bonds also occurs).. Cleaves peptides in various proteins in a process that requires ATP hydrolysis. Has a chymotrypsin-like activity. Plays a major role in the degradation of misfolded proteins. This Thermosynechococcus vestitus (strain NIES-2133 / IAM M-273 / BP-1) protein is ATP-dependent Clp protease proteolytic subunit 2.